The chain runs to 1058 residues: Carbamoyl phosphate synthase large chain (1058 aa).

The segment at 1–401 (MPKRKDIQKI…SLLKACRSLE (401 aa)) is carboxyphosphate synthetic domain. 12 residues coordinate ATP: Arg129, Arg169, Gly175, Gly176, Arg208, Ile210, Glu215, Gly241, Ile242, His243, Gln284, and Glu298. The region spanning 133–327 (KQLMQELDQP…IAKLAAKIAV (195 aa)) is the ATP-grasp 1 domain. Residues Gln284, Glu298, and Asn300 each contribute to the Mg(2+) site. The Mn(2+) site is built by Gln284, Glu298, and Asn300. Positions 402–546 (IGVCHNEMTS…YSTYELENES (145 aa)) are oligomerization domain. Positions 547-929 (VQSNKESILV…ALYKAFEANN (383 aa)) are carbamoyl phosphate synthetic domain. The 191-residue stretch at 671–861 (EKALKELGIP…MAQIATKLIL (191 aa)) folds into the ATP-grasp 2 domain. The ATP site is built by Arg707, Ser746, Ile748, Glu752, Gly777, Val778, His779, Ser780, Gln820, and Glu832. Gln820, Glu832, and Asn834 together coordinate Mg(2+). Residues Gln820, Glu832, and Asn834 each coordinate Mn(2+). An MGS-like domain is found at 930 to 1058 (SHLSEFGQIV…ESRCFNIEAI (129 aa)). Positions 930–1058 (SHLSEFGQIV…ESRCFNIEAI (129 aa)) are allosteric domain.

Belongs to the CarB family. Composed of two chains; the small (or glutamine) chain promotes the hydrolysis of glutamine to ammonia, which is used by the large (or ammonia) chain to synthesize carbamoyl phosphate. Tetramer of heterodimers (alpha,beta)4. Requires Mg(2+) as cofactor. It depends on Mn(2+) as a cofactor.

It catalyses the reaction hydrogencarbonate + L-glutamine + 2 ATP + H2O = carbamoyl phosphate + L-glutamate + 2 ADP + phosphate + 2 H(+). It carries out the reaction hydrogencarbonate + NH4(+) + 2 ATP = carbamoyl phosphate + 2 ADP + phosphate + 2 H(+). It participates in amino-acid biosynthesis; L-arginine biosynthesis; carbamoyl phosphate from bicarbonate: step 1/1. It functions in the pathway pyrimidine metabolism; UMP biosynthesis via de novo pathway; (S)-dihydroorotate from bicarbonate: step 1/3. Functionally, large subunit of the glutamine-dependent carbamoyl phosphate synthetase (CPSase). CPSase catalyzes the formation of carbamoyl phosphate from the ammonia moiety of glutamine, carbonate, and phosphate donated by ATP, constituting the first step of 2 biosynthetic pathways, one leading to arginine and/or urea and the other to pyrimidine nucleotides. The large subunit (synthetase) binds the substrates ammonia (free or transferred from glutamine from the small subunit), hydrogencarbonate and ATP and carries out an ATP-coupled ligase reaction, activating hydrogencarbonate by forming carboxy phosphate which reacts with ammonia to form carbamoyl phosphate. This chain is Carbamoyl phosphate synthase large chain, found in Streptococcus pyogenes serotype M1.